The following is a 430-amino-acid chain: Enolase (430 aa).

Position 166 (Gln-166) interacts with (2R)-2-phosphoglycerate. Glu-208 acts as the Proton donor in catalysis. Residues Asp-245, Glu-288, and Asp-315 each contribute to the Mg(2+) site. (2R)-2-phosphoglycerate is bound by residues Lys-340, Arg-369, Ser-370, and Lys-391. Lys-340 serves as the catalytic Proton acceptor.

It belongs to the enolase family. The cofactor is Mg(2+).

The protein resides in the cytoplasm. It localises to the secreted. Its subcellular location is the cell surface. It catalyses the reaction (2R)-2-phosphoglycerate = phosphoenolpyruvate + H2O. It participates in carbohydrate degradation; glycolysis; pyruvate from D-glyceraldehyde 3-phosphate: step 4/5. In terms of biological role, catalyzes the reversible conversion of 2-phosphoglycerate (2-PG) into phosphoenolpyruvate (PEP). It is essential for the degradation of carbohydrates via glycolysis. The polypeptide is Enolase (Clostridium beijerinckii (strain ATCC 51743 / NCIMB 8052) (Clostridium acetobutylicum)).